The sequence spans 140 residues: Putative nickel-responsive regulator (140 aa).

The Ni(2+) site is built by H81, H92, H94, and C100.

Belongs to the transcriptional regulatory CopG/NikR family. Requires Ni(2+) as cofactor.

Its function is as follows. Transcriptional regulator. The protein is Putative nickel-responsive regulator of Methanocella arvoryzae (strain DSM 22066 / NBRC 105507 / MRE50).